A 279-amino-acid chain; its full sequence is Diaminopimelate epimerase (279 aa).

Residues N14 and Q68 each contribute to the substrate site. C77 acts as the Proton donor in catalysis. Residues 78 to 79 (GN), N191, and 207 to 208 (ER) contribute to the substrate site. C217 acts as the Proton acceptor in catalysis. 218-219 (GT) serves as a coordination point for substrate.

It belongs to the diaminopimelate epimerase family. As to quaternary structure, homodimer.

The protein resides in the cytoplasm. The enzyme catalyses (2S,6S)-2,6-diaminopimelate = meso-2,6-diaminopimelate. Its pathway is amino-acid biosynthesis; L-lysine biosynthesis via DAP pathway; DL-2,6-diaminopimelate from LL-2,6-diaminopimelate: step 1/1. Its function is as follows. Catalyzes the stereoinversion of LL-2,6-diaminopimelate (L,L-DAP) to meso-diaminopimelate (meso-DAP), a precursor of L-lysine. The chain is Diaminopimelate epimerase from Methanothrix thermoacetophila (strain DSM 6194 / JCM 14653 / NBRC 101360 / PT) (Methanosaeta thermophila).